A 255-amino-acid chain; its full sequence is Placenta-expressed transcript 1 protein (255 aa).

A signal peptide spans 1–26 (MPALRTLLPHLGLFLCLALCFSPSFS). Residues Asn-57, Asn-67, and Asn-126 are each glycosylated (N-linked (GlcNAc...) asparagine). Ser-236 carries the GPI-anchor amidated serine lipid modification. Residues 237–255 (PLAGALHILLVFLISKLLF) constitute a propeptide, removed in mature form.

N-glycosylated. Post-translationally, GPI-anchored.

The protein localises to the apical cell membrane. Its function is as follows. Modulates leading keratinocyte migration and cellular adhesion to matrix proteins during a wound-healing response and promotes wound repair. May play a role during trichilemmal differentiation of the hair follicle. The protein is Placenta-expressed transcript 1 protein (Plet1) of Rattus norvegicus (Rat).